The following is a 622-amino-acid chain: Phosphatidylinositol 4-kinase gamma 6 (622 aa).

A Ubiquitin-like; degenerate domain is found at 38–95 (RRVFVQTDTGCVLGVELDRNDNVHTVKKRLQIAFNFPTEESSLTFGDMVLKNDLSAVR). Residues 158–459 (GVEPIPVNGG…LTTEQDVLSP (302 aa)) form the PI3K/PI4K catalytic domain. Residues 164 to 170 (VNGGLGG) form a G-loop region. ATP contacts are provided by residues 165-171 (NGGLGGA), Lys186, and 277-280 (QKFV). A catalytic loop region spans residues 310–318 (LNTDRHGGN). The interval 339 to 365 (PIDHGLCLPETLEDPYFEWIHWPQASI) is activation loop. Asp341 contributes to the ATP binding site. Ser565 is modified (phosphoserine).

It belongs to the PI3/PI4-kinase family. Type II PI4K subfamily.

It catalyses the reaction a 1,2-diacyl-sn-glycero-3-phospho-(1D-myo-inositol) + ATP = a 1,2-diacyl-sn-glycero-3-phospho-(1D-myo-inositol 4-phosphate) + ADP + H(+). Its function is as follows. The phosphorylation of phosphatidylinositol (PI) to PI4P is the first committed step in the generation of phosphatidylinositol 4,5-bisphosphate (PIP2), a precursor of the second messenger inositol 1,4,5-trisphosphate (InsP3). This Arabidopsis thaliana (Mouse-ear cress) protein is Phosphatidylinositol 4-kinase gamma 6 (PI4KG6).